Consider the following 176-residue polypeptide: MAMSFEWPWQYRFPPFFTLQPNVDTRQKQLAAWCSLVLSFCRLHKQSSMTVMEAQESPLFNNVKLQRKLPVESIQIVLEELRKKGNLEWLDKSKSSFLIMWRRPEEWGKLIYQWVSRSGQNNSVFTLYELTNGEDTEDEEFHGLDEATLLRALQALQQEHKAEIITVSDGRGVKFF.

Belongs to the VPS25 family. As to quaternary structure, component of a complex at least composed of ELL, SNF8/EAP30, VPS25/EAP20 and VPS36/EAP45. Component of the endosomal sorting complex required for transport II (ESCRT-II), composed of SNF8, VPS36 and 2 copies of VPS25. Interacts with CFTR; the interaction requires misfolded CFTR. Interacts (via C-terminal half) with the ESCRT-III subunit CHMP6 (via N-terminal half). In terms of tissue distribution, expressed at the mRNA level in kidney, liver, pancreas, and placenta. Lower levels of expression are found in heart, skeletal muscle, brain and lung.

The protein localises to the cytoplasm. Its subcellular location is the endosome membrane. It is found in the nucleus. It localises to the nucleoplasm. In terms of biological role, component of the ESCRT-II complex (endosomal sorting complex required for transport II), which is required for multivesicular body (MVB) formation and sorting of endosomal cargo proteins into MVBs. The MVB pathway mediates delivery of transmembrane proteins into the lumen of the lysosome for degradation. The ESCRT-II complex is probably involved in the recruitment of the ESCRT-III complex. The ESCRT-II complex may also play a role in transcription regulation, possibly via its interaction with ELL. The ESCRT-II complex may be involved in facilitating the budding of certain RNA viruses. The protein is Vacuolar protein-sorting-associated protein 25 (VPS25) of Homo sapiens (Human).